Here is a 370-residue protein sequence, read N- to C-terminus: Aminomethyltransferase (370 aa).

The protein belongs to the GcvT family. The glycine cleavage system is composed of four proteins: P, T, L and H.

It catalyses the reaction N(6)-[(R)-S(8)-aminomethyldihydrolipoyl]-L-lysyl-[protein] + (6S)-5,6,7,8-tetrahydrofolate = N(6)-[(R)-dihydrolipoyl]-L-lysyl-[protein] + (6R)-5,10-methylene-5,6,7,8-tetrahydrofolate + NH4(+). Its function is as follows. The glycine cleavage system catalyzes the degradation of glycine. In Prochlorococcus marinus (strain MIT 9215), this protein is Aminomethyltransferase.